The chain runs to 180 residues: Large ribosomal subunit protein uL6 (180 aa).

Belongs to the universal ribosomal protein uL6 family. As to quaternary structure, part of the 50S ribosomal subunit.

Its function is as follows. This protein binds to the 23S rRNA, and is important in its secondary structure. It is located near the subunit interface in the base of the L7/L12 stalk, and near the tRNA binding site of the peptidyltransferase center. In Thermodesulfovibrio yellowstonii (strain ATCC 51303 / DSM 11347 / YP87), this protein is Large ribosomal subunit protein uL6.